Consider the following 219-residue polypeptide: 2-phospho-L-lactate guanylyltransferase (219 aa).

It belongs to the CofC family. Homodimer.

The enzyme catalyses (2S)-2-phospholactate + GTP + H(+) = (2S)-lactyl-2-diphospho-5'-guanosine + diphosphate. Its pathway is cofactor biosynthesis; coenzyme F420 biosynthesis. Its function is as follows. Guanylyltransferase that catalyzes the activation of (2S)-2-phospholactate (2-PL) as (2S)-lactyl-2-diphospho-5'-guanosine, via the condensation of 2-PL with GTP. It is involved in the biosynthesis of coenzyme F420, a hydride carrier cofactor. The sequence is that of 2-phospho-L-lactate guanylyltransferase from Methanocella arvoryzae (strain DSM 22066 / NBRC 105507 / MRE50).